A 456-amino-acid chain; its full sequence is GTPase Der (456 aa).

EngA-type G domains follow at residues 3–167 and 185–360; these read FTIA…PETE and IRVA…AVWN. GTP is bound by residues 9 to 16, 56 to 60, 119 to 122, 191 to 198, 238 to 242, and 303 to 306; these read GRPNVGKS, DTAGL, NKSE, GRPNAGKS, and NKWD. One can recognise a KH-like domain in the interval 361–445; it reads RRVPTAALNR…PVRITLREKA (85 aa).

Belongs to the TRAFAC class TrmE-Era-EngA-EngB-Septin-like GTPase superfamily. EngA (Der) GTPase family. Associates with the 50S ribosomal subunit.

GTPase that plays an essential role in the late steps of ribosome biogenesis. This is GTPase Der from Bradyrhizobium sp. (strain BTAi1 / ATCC BAA-1182).